The chain runs to 430 residues: Histidine--tRNA ligase (430 aa).

This sequence belongs to the class-II aminoacyl-tRNA synthetase family. In terms of assembly, homodimer.

It is found in the cytoplasm. It carries out the reaction tRNA(His) + L-histidine + ATP = L-histidyl-tRNA(His) + AMP + diphosphate + H(+). The polypeptide is Histidine--tRNA ligase (Anaplasma marginale (strain St. Maries)).